The following is a 293-amino-acid chain: Aspartate carbamoyltransferase catalytic subunit (293 aa).

2 residues coordinate carbamoyl phosphate: R50 and T51. K78 is an L-aspartate binding site. R100, H127, and Q130 together coordinate carbamoyl phosphate. L-aspartate-binding residues include R160 and R210. The carbamoyl phosphate site is built by A253 and P254.

It belongs to the aspartate/ornithine carbamoyltransferase superfamily. ATCase family. Heterododecamer (2C3:3R2) of six catalytic PyrB chains organized as two trimers (C3), and six regulatory PyrI chains organized as three dimers (R2).

It catalyses the reaction carbamoyl phosphate + L-aspartate = N-carbamoyl-L-aspartate + phosphate + H(+). It participates in pyrimidine metabolism; UMP biosynthesis via de novo pathway; (S)-dihydroorotate from bicarbonate: step 2/3. Catalyzes the condensation of carbamoyl phosphate and aspartate to form carbamoyl aspartate and inorganic phosphate, the committed step in the de novo pyrimidine nucleotide biosynthesis pathway. The polypeptide is Aspartate carbamoyltransferase catalytic subunit (Staphylococcus aureus (strain USA300)).